We begin with the raw amino-acid sequence, 47 residues long: MLRVRKRDGRLEEFSRAKIVRTCLRAGASKKIAEKVAEELKRGYTMG.

One can recognise an ATP-cone domain in the interval 2–47; sequence LRVRKRDGRLEEFSRAKIVRTCLRAGASKKIAEKVAEELKRGYTMG.

This is an uncharacterized protein from Archaeoglobus fulgidus (strain ATCC 49558 / DSM 4304 / JCM 9628 / NBRC 100126 / VC-16).